A 295-amino-acid polypeptide reads, in one-letter code: Bifunctional protein FolD (295 aa).

NADP(+) is bound by residues 166 to 168, serine 191, and isoleucine 232; that span reads GRS.

The protein belongs to the tetrahydrofolate dehydrogenase/cyclohydrolase family. In terms of assembly, homodimer.

The enzyme catalyses (6R)-5,10-methylene-5,6,7,8-tetrahydrofolate + NADP(+) = (6R)-5,10-methenyltetrahydrofolate + NADPH. It catalyses the reaction (6R)-5,10-methenyltetrahydrofolate + H2O = (6R)-10-formyltetrahydrofolate + H(+). Its pathway is one-carbon metabolism; tetrahydrofolate interconversion. Its function is as follows. Catalyzes the oxidation of 5,10-methylenetetrahydrofolate to 5,10-methenyltetrahydrofolate and then the hydrolysis of 5,10-methenyltetrahydrofolate to 10-formyltetrahydrofolate. This is Bifunctional protein FolD from Wolbachia sp. subsp. Brugia malayi (strain TRS).